Here is a 485-residue protein sequence, read N- to C-terminus: MDRQPERENDELPSPAIISDRVLVNGVVTPLTLTAEGELRSTESGRRKSTLAKEILSFVVEGNKVRVKTLVEKGGGICCRGSAGDYARNDFVFEPLSDESRKLWSDKFHQHLVSLGRPKKLLVFVNPFGGKKTARKIFQEEVKPLFEDANIQLEIQETKYQLHAKEIVRSMDVSKYDGIVCVSGDGILVEVVNGLLEREDWKTAIKLPIGMVPAGSGNGMIKSLLEPVGLPCSATSATISIIRGRTRSLDVATISQGTTKFFSVLMLAWGLVADIDIESEKFRWMGSARFDIYGLQRIICLRQYHGRILFVPAPGFESYGQRASCSIDKEPSGSDKTLVYQGPDSKLENLDWREMKGPFVSVWLHNVPWGAENTLAAPDAKFSDGFLDLIVMKDCPKLALLSLMTKLSDGTHVQSPYASYLKVKAFVLEPGARIDEPDKEGIIDSDGEVLARGRKSYKCDQKALMSYDKLQISVDQGLATLFSPE.

The DAGKc domain occupies 116-258 (GRPKKLLVFV…LDVATISQGT (143 aa)). ATP-binding positions include 126-128 (NPF) and Thr-158. Residue 183-186 (SGDG) coordinates substrate. Catalysis depends on Asp-185, which acts as the Proton donor/acceptor. Residues Glu-190 and 215 to 217 (GSG) each bind ATP. Asp-276 contacts substrate. ATP contacts are provided by residues Arg-283, Arg-289, and 446–448 (DGE).

Mg(2+) is required as a cofactor. In terms of tissue distribution, highly expressed in stems and flowers and at lower levels in roots, leaves and siliques.

The protein localises to the vacuole membrane. The enzyme catalyses a sphingoid base + ATP = a sphingoid 1-phosphate + ADP + H(+). Its activity is regulated as follows. Activated by phosphatidic acid (PA). Binding with PA stimulates the activity by promoting the binding of substrate to the catalytic site. Its function is as follows. Involved in the production of sphingolipid metabolites. Phosphorylates sphingosine and various sphingoid long-chain base (LCB) products, such as phytosphingosine (PHS, 4-hydroxysphinganine), 4-hydroxy-8-sphingenine, 4,8-sphingadienine, D-erythro-dihydrosphingosine and D,L-threo-dihydrosphingosine. Is required for abscisic acid (ABA) signaling that mediates stomatal closure, inhibition of seed germination and root elongation. May function upstream of PLDALPHA1 and phosphatidic acid (PA) in an amplification response to ABA that mediates stomatal closure. This Arabidopsis thaliana (Mouse-ear cress) protein is Sphingosine kinase 1 (SPHK1).